Here is a 142-residue protein sequence, read N- to C-terminus: MAAAVAAAGAGEPLSPEELVPKAEAEKAEEDLEEDDDDELDETLSERLWGLTEMFPERVRSAAGATFDLSLFVAQKMYRFSRAALWIGTTSFMILVLPVVFETEKLQMEQQQQLQQRQILLGPNTGLSGGMPGALPPLPGKI.

Positions 1 to 11 (MAAAVAAAGAG) are enriched in low complexity. A disordered region spans residues 1 to 40 (MAAAVAAAGAGEPLSPEELVPKAEAEKAEEDLEEDDDDEL). N-acetylalanine is present on A2. The Cytoplasmic segment spans residues 2 to 82 (AAAVAAAGAG…VAQKMYRFSR (81 aa)). Residue S15 is modified to Phosphoserine. The segment covering 27–40 (KAEEDLEEDDDDEL) has biased composition (acidic residues). Residues 41–50 (DETLSERLWG) form an import sequence; necessary for mitochondrion outer membrane localization and integration in the TOM complex region. Residue T43 is modified to Phosphothreonine. Position 45 is a phosphoserine (S45). The helical transmembrane segment at 83-103 (AALWIGTTSFMILVLPVVFET) threads the bilayer. Residues 83–103 (AALWIGTTSFMILVLPVVFET) are TMD; necessary for mitochondrion outer membrane localization and integration in the TOM complex. The Mitochondrial intermembrane segment spans residues 104 to 142 (EKLQMEQQQQLQQRQILLGPNTGLSGGMPGALPPLPGKI). The tract at residues 123–142 (PNTGLSGGMPGALPPLPGKI) is C-tail signal; necessary for mitochondrion outer membrane localization and integration in the TOM complex.

This sequence belongs to the Tom22 family. In terms of assembly, forms part of the preprotein translocase complex of the outer mitochondrial membrane (TOM complex) which consists of at least 7 different proteins (TOMM5, TOMM6, TOMM7, TOMM20, TOMM22, TOMM40 and TOMM70). Interacts with TOMM40. Interacts with PPP2R2B.

It is found in the mitochondrion outer membrane. Functionally, central receptor component of the translocase of the outer membrane of mitochondria (TOM complex) responsible for the recognition and translocation of cytosolically synthesized mitochondrial preproteins. Together with the peripheral receptor TOM20 functions as the transit peptide receptor and facilitates the movement of preproteins into the translocation pore. Required for the translocation across the mitochondrial outer membrane of cytochrome P450 monooxygenases. In Rattus norvegicus (Rat), this protein is Mitochondrial import receptor subunit TOM22 homolog (Tomm22).